A 480-amino-acid chain; its full sequence is Glutamate--tRNA ligase (480 aa).

The 'HIGH' region motif lies at 12–22 (PSPTGAPHLGL). A 'KMSKS' region motif is present at residues 255–259 (KLSKR). Lysine 258 provides a ligand contact to ATP.

It belongs to the class-I aminoacyl-tRNA synthetase family. Glutamate--tRNA ligase type 1 subfamily. Monomer.

Its subcellular location is the cytoplasm. It catalyses the reaction tRNA(Glu) + L-glutamate + ATP = L-glutamyl-tRNA(Glu) + AMP + diphosphate. Catalyzes the attachment of glutamate to tRNA(Glu) in a two-step reaction: glutamate is first activated by ATP to form Glu-AMP and then transferred to the acceptor end of tRNA(Glu). The polypeptide is Glutamate--tRNA ligase (Tropheryma whipplei (strain TW08/27) (Whipple's bacillus)).